The primary structure comprises 149 residues: Arginine repressor (149 aa).

The protein belongs to the ArgR family.

It is found in the cytoplasm. The protein operates within amino-acid biosynthesis; L-arginine biosynthesis [regulation]. Its function is as follows. Regulates arginine biosynthesis genes. The sequence is that of Arginine repressor from Geobacillus kaustophilus (strain HTA426).